The chain runs to 341 residues: 4-(gamma-L-glutamylamino)butanoyl-[BtrI acyl-carrier protein] monooxygenase BtrO (341 aa).

Belongs to the bacterial luciferase oxidoreductase family.

It catalyses the reaction 4-(gamma-L-glutamylamino)butanoyl-[BtrI ACP] + FMNH2 + O2 = 4-(gamma-L-glutamylamino)-(2S)-2-hydroxybutanoyl-[BtrI ACP] + FMN + H2O + H(+). The protein operates within antibiotic biosynthesis; butirosin biosynthesis. Monooxygenase component of a two-component system involved in the biosynthesis of the side chain of the aminoglycoside antibiotics in the biosynthetic pathway of butirosin. Together with BtrV, mediates hydroxylation of gamma-L-Glu-GABA-S-BtrI. Not able to hydroxylate free substrates, activation by the acyl-carrier protein is mandatory. Octanoyl-S-[BtrI acyl-carrier protein] is also accepted as substrate. The chain is 4-(gamma-L-glutamylamino)butanoyl-[BtrI acyl-carrier protein] monooxygenase BtrO (btrO) from Niallia circulans (Bacillus circulans).